The primary structure comprises 609 residues: UvrABC system protein C (609 aa).

The GIY-YIG domain maps to 15-92; the sequence is TGSGVYQIQD…IKQFRPRYNV (78 aa). In terms of domain architecture, UVR spans 202 to 237; the sequence is DQVIIKLTERMEVASENLVFEEAAHYRDQIRQLRRL.

It belongs to the UvrC family. As to quaternary structure, interacts with UvrB in an incision complex.

Its subcellular location is the cytoplasm. In terms of biological role, the UvrABC repair system catalyzes the recognition and processing of DNA lesions. UvrC both incises the 5' and 3' sides of the lesion. The N-terminal half is responsible for the 3' incision and the C-terminal half is responsible for the 5' incision. This chain is UvrABC system protein C, found in Coxiella burnetii (strain Dugway 5J108-111).